A 1038-amino-acid polypeptide reads, in one-letter code: Importin-7 (1038 aa).

Methionine 1 carries the post-translational modification N-acetylmethionine. In terms of domain architecture, Importin N-terminal spans 22–101; sequence AERQLNEAHK…RENIVEAIIH (80 aa). Residues 881 to 910 form a disordered region; the sequence is EHENDSDDDDEAEDDDETEELGSDEDDIDE. A compositionally biased stretch (acidic residues) spans 884–910; sequence NDSDDDDEAEDDDETEELGSDEDDIDE. A Phosphoserine modification is found at serine 886. Threonine 898 is modified (phosphothreonine). Serine 903 and serine 1020 each carry phosphoserine.

Belongs to the importin beta family. In terms of assembly, forms a heterodimer with KPNB1. Interacts with histone H1. Interacts with H2A, H2B, H3 and H4 histones. Interacts with SNUPN and XPO1. Interacts with RPS7 and RPL5. Interacts with RPL23A (via BIB domain). Binds directly to nuclear pore complexes. Interacts with SMAD4 and NUP93; translocates SMAD4 to the nucleus through the NPC upon BMP7 stimulation resulting in activation of SMAD4 signaling. Interacts with phosphorylated SMAD2; the interaction facilitates translocation of SMAD2 to the nucleus. Interacts with SRP19. Interacts with RUNX2; the interaction inhibits RUNX2 nuclear translocation in osteoblasts. Interacts with HDAC6, DLX3 and KLF4; the interaction facilitates HDAC6, DLX3 and KLF4 nuclear translocation in dental papilla cells. (Microbial infection) Interacts with HIV-1 reverse transcription complex integrase and rev.

The protein localises to the cytoplasm. It localises to the nucleus. In terms of biological role, functions in nuclear protein import, either by acting as autonomous nuclear transport receptor or as an adapter-like protein in association with the importin-beta subunit KPNB1. Acting autonomously, is thought to serve itself as receptor for nuclear localization signals (NLS) and to promote translocation of import substrates through the nuclear pore complex (NPC) by an energy requiring, Ran-dependent mechanism. At the nucleoplasmic side of the NPC, Ran binds to importin, the importin/substrate complex dissociates and importin is re-exported from the nucleus to the cytoplasm where GTP hydrolysis releases Ran. The directionality of nuclear import is thought to be conferred by an asymmetric distribution of the GTP- and GDP-bound forms of Ran between the cytoplasm and nucleus. Mediates autonomously the nuclear import of ribosomal proteins RPL23A, RPS7 and RPL5. In association with KPNB1 mediates the nuclear import of H1 histone and the Ran-binding site of IPO7 is not required but synergizes with that of KPNB1 in importin/substrate complex dissociation. Promotes odontoblast differentiation via promoting nuclear translocation of DLX3, KLF4, SMAD2, thereby facilitating the transcription of target genes that play a role in odontoblast differentiation. Facilitates BMP4-induced translocation of SMAD1 to the nucleus and recruitment to the MSX1 gene promoter, thereby promotes the expression of the odontogenic regulator MSX1 in dental mesenchymal cells. Also promotes odontoblast differentiation by facilitating the nuclear translocation of HDAC6 and subsequent repression of RUNX2 expression. Inhibits osteoblast differentiation by inhibiting nuclear translocation of RUNX2 and therefore inhibition of RUNX2 target gene transcription. In vitro, mediates nuclear import of H2A, H2B, H3 and H4 histones. Its function is as follows. (Microbial infection) Mediates the nuclear import of HIV-1 reverse transcription complex (RTC) integrase. Binds and mediates the nuclear import of HIV-1 Rev. The protein is Importin-7 (IPO7) of Homo sapiens (Human).